A 315-amino-acid chain; its full sequence is Peroxidase 4 (315 aa).

Positions 1–19 are cleaved as a signal peptide; that stretch reads MAIFKILVLLLSLCCFSQA. Glutamine 20 is subject to Pyrrolidone carboxylic acid. 4 disulfide bridges follow: cysteine 30–cysteine 110, cysteine 63–cysteine 68, cysteine 116–cysteine 311, and cysteine 195–cysteine 221. The Proton acceptor role is filled by histidine 61. 5 residues coordinate Ca(2+): aspartate 62, valine 65, glycine 67, aspartate 69, and serine 71. Proline 158 contacts substrate. Histidine 188 provides a ligand contact to heme b. Residue threonine 189 coordinates Ca(2+). N-linked (GlcNAc...) asparagine glycosylation occurs at asparagine 205. The Ca(2+) site is built by aspartate 234, threonine 237, and aspartate 242.

Belongs to the peroxidase family. Classical plant (class III) peroxidase subfamily. It depends on heme b as a cofactor. The cofactor is Ca(2+).

The protein resides in the secreted. The catalysed reaction is 2 a phenolic donor + H2O2 = 2 a phenolic radical donor + 2 H2O. Functionally, removal of H(2)O(2), oxidation of toxic reductants, biosynthesis and degradation of lignin, suberization, auxin catabolism, response to environmental stresses such as wounding, pathogen attack and oxidative stress. These functions might be dependent on each isozyme/isoform in each plant tissue. In Arabidopsis thaliana (Mouse-ear cress), this protein is Peroxidase 4 (PER4).